Reading from the N-terminus, the 741-residue chain is NAD(P)H-quinone oxidoreductase subunit 5, chloroplastic (741 aa).

The next 18 helical transmembrane spans lie at 9 to 29 (WIVPFLPLSASVPIGLGSLFF), 40 to 60 (WALISIFLLSVAMFLSFNLFL), 89 to 109 (IDPLTSIMLVLVTTVGTMVMI), 124 to 144 (FFAYLNFFNASMLGLVISPNL), 147 to 167 (IYIFWELVGMCSYLLIGFWFT), 185 to 205 (GDFGLLLGILGFYWVTGSFEF), 218 to 238 (IDGVGSFFVTSCAFLLFLGPV), 258 to 278 (TPISALIHAATMVAAGIFLVA), 286 to 306 (ALPLIMYLISWIGGITALLGA), 327 to 347 (LGYMMLALGIDSYRIALFHLI), 354 to 374 (ALLFLGSGSVIHSMEPIVGYC), 395 to 415 (GITFLLGTLSLSGIPPFACFW), 427 to 447 (YSPIFGGITWFTAGLTAFYMF), 550 to 570 (FPLVVLGIFTLFVGLIGVPFF), 601 to 621 (FFIDAIPSVGIAFLGILIACI), 651 to 671 (IIYNWSFYQAYIDIYYDIILI), 687 to 707 (WAIDGIPNGVGFLGLFVGEGM), and 719 to 739 (IFFSLFCVLISILIYYYSFSF).

Belongs to the complex I subunit 5 family. As to quaternary structure, NDH is composed of at least 16 different subunits, 5 of which are encoded in the nucleus.

The protein localises to the plastid. It localises to the chloroplast thylakoid membrane. The enzyme catalyses a plastoquinone + NADH + (n+1) H(+)(in) = a plastoquinol + NAD(+) + n H(+)(out). It catalyses the reaction a plastoquinone + NADPH + (n+1) H(+)(in) = a plastoquinol + NADP(+) + n H(+)(out). Its function is as follows. NDH shuttles electrons from NAD(P)H:plastoquinone, via FMN and iron-sulfur (Fe-S) centers, to quinones in the photosynthetic chain and possibly in a chloroplast respiratory chain. The immediate electron acceptor for the enzyme in this species is believed to be plastoquinone. Couples the redox reaction to proton translocation, and thus conserves the redox energy in a proton gradient. This Cryptomeria japonica (Japanese cedar) protein is NAD(P)H-quinone oxidoreductase subunit 5, chloroplastic (ndhF).